The primary structure comprises 263 residues: DNA repair protein RecO (263 aa).

The disordered stretch occupies residues 243–263 (DRKETARETVPTSDGTASNAV). Residues 252 to 263 (VPTSDGTASNAV) show a composition bias toward polar residues.

The protein belongs to the RecO family.

Functionally, involved in DNA repair and RecF pathway recombination. The chain is DNA repair protein RecO from Neisseria meningitidis serogroup C / serotype 2a (strain ATCC 700532 / DSM 15464 / FAM18).